Here is a 95-residue protein sequence, read N- to C-terminus: DNA-directed RNA polymerase subunit omega (95 aa).

It belongs to the RNA polymerase subunit omega family. The RNAP catalytic core consists of 2 alpha, 1 beta, 1 beta' and 1 omega subunit. When a sigma factor is associated with the core the holoenzyme is formed, which can initiate transcription.

The enzyme catalyses RNA(n) + a ribonucleoside 5'-triphosphate = RNA(n+1) + diphosphate. Functionally, promotes RNA polymerase assembly. Latches the N- and C-terminal regions of the beta' subunit thereby facilitating its interaction with the beta and alpha subunits. This Colwellia psychrerythraea (strain 34H / ATCC BAA-681) (Vibrio psychroerythus) protein is DNA-directed RNA polymerase subunit omega.